A 164-amino-acid polypeptide reads, in one-letter code: Protein-export protein SecB (164 aa).

This sequence belongs to the SecB family. Homotetramer, a dimer of dimers. One homotetramer interacts with 1 SecA dimer.

It localises to the cytoplasm. Functionally, one of the proteins required for the normal export of preproteins out of the cell cytoplasm. It is a molecular chaperone that binds to a subset of precursor proteins, maintaining them in a translocation-competent state. It also specifically binds to its receptor SecA. The polypeptide is Protein-export protein SecB (Nitrosococcus oceani (strain ATCC 19707 / BCRC 17464 / JCM 30415 / NCIMB 11848 / C-107)).